We begin with the raw amino-acid sequence, 20 residues long: DELTA-actitoxin-Afr1b (20 aa).

The protein belongs to the actinoporin family. Sea anemone subfamily. As to quaternary structure, octamer or nonamer in membranes. Monomer in the soluble state.

It localises to the secreted. The protein localises to the nematocyst. It is found in the target cell membrane. In terms of biological role, pore-forming toxin (PFT) that consists of a crown-shaped octamer or nonamer that forms cation-selective hydrophilic pores of about 1.5 nm (inside) and 13 nm (outside) and causes cytolysis. It causes cardiac stimulation. Also causes hemolysis (HC(50)=0.4 nM). Interestingly, the Phe-16 is crucial for hemolysis. Pore formation is a multi-step process that involves specific recognition of membrane sphingomyelin (but neither cholesterol nor phosphatidylcholine) using aromatic rich region and adjacent phosphocholine (POC) binding site, firm binding to the membrane (mainly driven by hydrophobic interactions) accompanied by the transfer of the N-terminal region to the lipid-water interface and finally pore formation after oligomerization of monomers. It is probable that a dimeric form is an assembly intermediate before the complete oligomerization. The formation of stable pores occurs only in vesicles composed of DOPC/SM (there is no oligomerization when the PFT is treated with vesicles of DOPC or SM alone). The transmembrane pore displays 8 lateral perforations, one at each subunit-subunit interface, partially occupied by the acyl-chain region of a bridging lipid. Each pore contains 24 lipid molecules, firmly bound to each subunit, that is, 3 lipids (L1, L2, L3, L4 and/or L5) are associated to each subunit. Lipid L1 bridges 2 subunits, whereas lipids L2 and L3 bind to sites at single subunit. The chain is DELTA-actitoxin-Afr1b from Actinia fragacea (Strawberry anemone).